A 398-amino-acid chain; its full sequence is NADH-quinone oxidoreductase subunit D (398 aa).

Belongs to the complex I 49 kDa subunit family. NDH-1 is composed of 14 different subunits. Subunits NuoB, C, D, E, F, and G constitute the peripheral sector of the complex.

The protein resides in the cell inner membrane. It catalyses the reaction a quinone + NADH + 5 H(+)(in) = a quinol + NAD(+) + 4 H(+)(out). Its function is as follows. NDH-1 shuttles electrons from NADH, via FMN and iron-sulfur (Fe-S) centers, to quinones in the respiratory chain. The immediate electron acceptor for the enzyme in this species is believed to be ubiquinone. Couples the redox reaction to proton translocation (for every two electrons transferred, four hydrogen ions are translocated across the cytoplasmic membrane), and thus conserves the redox energy in a proton gradient. The polypeptide is NADH-quinone oxidoreductase subunit D (Bradyrhizobium sp. (strain BTAi1 / ATCC BAA-1182)).